Reading from the N-terminus, the 742-residue chain is Protein-lysine N-methyltransferase SMYD4 (742 aa).

An S-adenosyl-L-methionine-binding site is contributed by 110–112 (RSA). The 340-residue stretch at 230–569 (SSLSLNFSTE…SGQEIFHCYG (340 aa)) folds into the SET domain. Zn(2+)-binding residues include Cys-295, Cys-298, Cys-308, Cys-311, Cys-317, Cys-321, His-330, and Cys-334. The MYND-type zinc finger occupies 295–334 (CHHCLKQLLASIPCCGCSYAKYCSQNCADVAWEQYHRTEC). S-adenosyl-L-methionine-binding positions include Asn-418, 534–535 (NH), and Tyr-568.

It belongs to the class V-like SAM-binding methyltransferase superfamily.

It localises to the nucleus. The protein resides in the cytoplasm. It carries out the reaction L-lysyl-[protein] + S-adenosyl-L-methionine = N(6)-methyl-L-lysyl-[protein] + S-adenosyl-L-homocysteine + H(+). Its function is as follows. Protein-lysine N-methyltransferase. Monomethylates PRMT5, modulating its transcriptional activity. May also act as a histone methyltransferase. Plays a critical role in cardiac development. Acts as a key epigenetic regulator of gene expression during cardiac development via its dual activities as a methyltransferase and negative regulator of HDAC1. This is Protein-lysine N-methyltransferase SMYD4 (SMYD4) from Gallus gallus (Chicken).